A 150-amino-acid chain; its full sequence is Ribonuclease H (150 aa).

Residues Met-1–Thr-141 enclose the RNase H type-1 domain. Mg(2+) is bound by residues Asp-9, Glu-47, Asp-69, and Asp-133.

It belongs to the RNase H family. Monomer. It depends on Mg(2+) as a cofactor.

The protein localises to the cytoplasm. It catalyses the reaction Endonucleolytic cleavage to 5'-phosphomonoester.. In terms of biological role, endonuclease that specifically degrades the RNA of RNA-DNA hybrids. This Rhodopseudomonas palustris (strain BisB5) protein is Ribonuclease H.